The primary structure comprises 381 residues: MPFGNTHNKHKLNFKAEEEYPDLSKHNNHMAKALTLEIYKKLRDKETPSGFTLDDVIQTGVDNPGHPFIMTVGCVAGDEESYTVFKDLFDPIIQDRHGGFKPTDKHKTDLNHENLKGGDDLDPNYVLSSRVRTGRSIKGYALPPHCSRGERRAVEKLSVEALNSLTGEFKGKYYPLKSMTEQEQQQLIDDHFLFDKPVSPLLLASGMARDWPDARGIWHNDNKSFLVWVNEEDHLRVISMEKGGNMKEVFRRFCVGLQKIEEIFKKAGHPFMWNEHLGYVLTCPSNLGTGLRGGVHVKLAHLSKHPKFEEILTRLRLQKRGTGGVDTAAVGSVFDVSNADRLGSSEVEQVQLVVDGVKLMVEMEKKLEKGQSIDDMIPAQK.

In terms of domain architecture, Phosphagen kinase N-terminal spans 11–98 (KLNFKAEEEY…FDPIIQDRHG (88 aa)). The 243-residue stretch at 125-367 (YVLSSRVRTG…KLMVEMEKKL (243 aa)) folds into the Phosphagen kinase C-terminal domain. 128-132 (SSRVR) is an ATP binding site. Residue Ser164 is modified to Phosphoserine. Thr166 carries the phosphothreonine modification. Ser178 carries the post-translational modification Phosphoserine. Phosphothreonine is present on Thr180. His191 contributes to the ATP binding site. Ser199 is subject to Phosphoserine. ATP contacts are provided by Arg236 and Arg292. Residues Thr313 and Thr322 each carry the phosphothreonine modification. Residues 320 to 325 (RGTGGV) and Asp335 contribute to the ATP site. Position 372 is a phosphoserine (Ser372).

This sequence belongs to the ATP:guanido phosphotransferase family. As to quaternary structure, dimer of identical or non-identical chains, which can be either B (brain type) or M (muscle type). With MM being the major form in skeletal muscle and myocardium, MB existing in myocardium, and BB existing in many tissues, especially brain.

It localises to the cytoplasm. It carries out the reaction creatine + ATP = N-phosphocreatine + ADP + H(+). In terms of biological role, reversibly catalyzes the transfer of phosphate between ATP and various phosphogens (e.g. creatine phosphate). Creatine kinase isoenzymes play a central role in energy transduction in tissues with large, fluctuating energy demands, such as skeletal muscle, heart, brain and spermatozoa. In Bos taurus (Bovine), this protein is Creatine kinase M-type (CKM).